The following is a 335-amino-acid chain: GTPase Obg (335 aa).

One can recognise an Obg domain in the interval 1-159 (MKFVDSAKIS…IELEMELKLM (159 aa)). One can recognise an OBG-type G domain in the interval 160 to 323 (ADVGLVGFPN…LKDELWRQIS (164 aa)). Residues 166–173 (GFPNAGKS), 191–195 (FTTLV), 213–216 (DIPG), 280–283 (TKMD), and 304–306 (SSV) each bind GTP. Mg(2+) is bound by residues Ser173 and Thr193.

The protein belongs to the TRAFAC class OBG-HflX-like GTPase superfamily. OBG GTPase family. As to quaternary structure, monomer. The cofactor is Mg(2+).

The protein localises to the cytoplasm. In terms of biological role, an essential GTPase which binds GTP, GDP and possibly (p)ppGpp with moderate affinity, with high nucleotide exchange rates and a fairly low GTP hydrolysis rate. Plays a role in control of the cell cycle, stress response, ribosome biogenesis and in those bacteria that undergo differentiation, in morphogenesis control. In Chlorobaculum parvum (strain DSM 263 / NCIMB 8327) (Chlorobium vibrioforme subsp. thiosulfatophilum), this protein is GTPase Obg.